The following is a 186-amino-acid chain: MQRIWISGYRGYELGTFGDKDPKITVIKYAIKQCLTNLLEEGQLDWVITGANLGVEQWSAEVALELRQDYNLRLAVMLPYLDFGSRWSENNQLKLQNLKNQADFWSATSKGPYQGGRQFREYQQFMFQHTDRALLVYDPEYPGKSKYDYEMIEKYLEKRDDYQLDLVDYYDLEQAARDYEGNQREW.

Belongs to the UPF0398 family.

The sequence is that of UPF0398 protein LBUL_0921 from Lactobacillus delbrueckii subsp. bulgaricus (strain ATCC BAA-365 / Lb-18).